Here is a 553-residue protein sequence, read N- to C-terminus: HTH-type transcriptional regulator SgrR (553 aa).

Residues 1–113 enclose the HTH marR-type domain; that stretch reads MSTSRLQQQF…RQMLLSQLGR (113 aa). A DNA-binding region (H-T-H motif) is located at residues 26 to 49; the sequence is LQALAEVLNCSRRHVRSLLGKMQH. Residues 163-494 are solute-binding; the sequence is ELEPDLSHHW…EELHQDIESW (332 aa).

Activates the small RNA gene sgrS under glucose-phosphate stress conditions as well as yfdZ. Represses its own transcription under both stress and non-stress conditions. Might act as a sensor of the intracellular accumulation of phosphoglucose by binding these molecules in its C-terminal solute-binding domain. This Yersinia pseudotuberculosis serotype I (strain IP32953) protein is HTH-type transcriptional regulator SgrR.